Consider the following 96-residue polypeptide: Aspartyl/glutamyl-tRNA(Asn/Gln) amidotransferase subunit C (96 aa).

This sequence belongs to the GatC family. As to quaternary structure, heterotrimer of A, B and C subunits.

It carries out the reaction L-glutamyl-tRNA(Gln) + L-glutamine + ATP + H2O = L-glutaminyl-tRNA(Gln) + L-glutamate + ADP + phosphate + H(+). It catalyses the reaction L-aspartyl-tRNA(Asn) + L-glutamine + ATP + H2O = L-asparaginyl-tRNA(Asn) + L-glutamate + ADP + phosphate + 2 H(+). In terms of biological role, allows the formation of correctly charged Asn-tRNA(Asn) or Gln-tRNA(Gln) through the transamidation of misacylated Asp-tRNA(Asn) or Glu-tRNA(Gln) in organisms which lack either or both of asparaginyl-tRNA or glutaminyl-tRNA synthetases. The reaction takes place in the presence of glutamine and ATP through an activated phospho-Asp-tRNA(Asn) or phospho-Glu-tRNA(Gln). In Bacillus velezensis (strain DSM 23117 / BGSC 10A6 / LMG 26770 / FZB42) (Bacillus amyloliquefaciens subsp. plantarum), this protein is Aspartyl/glutamyl-tRNA(Asn/Gln) amidotransferase subunit C.